The chain runs to 880 residues: Dynamin-like protein A (880 aa).

A disordered region spans residues 1–124 (MSVFKKKDKS…QVELERKRRD (124 aa)). A compositionally biased stretch (basic and acidic residues) spans 8–20 (DKSDDKKKKHDEE). Over residues 22–31 (PQGTFQPASQ) the composition is skewed to polar residues. Positions 32 to 68 (STSNTNLNSLASSVNNGASVGSTNGSTPNNSNGSTPT) are enriched in low complexity. A coiled-coil region spans residues 69–152 (YNHNNSAEEL…NEQVEISSLE (84 aa)). Composition is skewed to basic and acidic residues over residues 77–94 (ELEK…KSEL) and 103–124 (KKKE…KRRD). The Dynamin-type G domain occupies 191–478 (AVSHPEIVFV…VWKSYQDTIP (288 aa)). Positions 201 to 208 (GPRSSGKS) are G1 motif. 201–208 (GPRSSGKS) provides a ligand contact to GTP. A G2 motif region spans residues 227-240 (IVGVGGSNANGCSK). The segment at 315-318 (DSPG) is G3 motif. GTP is bound by residues 315–319 (DSPGL) and 380–383 (TKFH). The G4 motif stretch occupies residues 380-383 (TKFH). A G5 motif region spans residues 413 to 416 (LPNH). Positions 479-509 (RILKHLRSKRQTAEATLNELQKQSSSLDSTK) form a coiled coil. The span at 532–543 (TSEGNPSANGQT) shows a compositional bias: polar residues. The disordered stretch occupies residues 532–551 (TSEGNPSANGQTLDEEKSQQ). Residues 824-861 (SNEQLEQLFEVQATREQLKQEEKKQQQILEKYSQIDEQ) are a coiled coil.

Belongs to the TRAFAC class dynamin-like GTPase superfamily. Dynamin/Fzo/YdjA family.

The protein resides in the cytoplasm. The protein localises to the cleavage furrow. The catalysed reaction is GTP + H2O = GDP + phosphate + H(+). Its function is as follows. Involved in cytokinesis. May hydrolyze GTP. The chain is Dynamin-like protein A (dlpA) from Dictyostelium discoideum (Social amoeba).